The following is a 178-amino-acid chain: MAELKTVARPYAKAVFEVAREQGHIVEWADMLNVLASVTVEPKLKKALGNPAFSAEEKANALADVCAEVTTEQGKAFLLALAVNKRLSLLPAISELFLQFKLNFEKAVNVQFTSAFELTAEQTQALAASLAKKLDRTVNLTSETDASLIGGVVIRTGDLIIDGSVRGKLAKLAEAINS.

This sequence belongs to the ATPase delta chain family. F-type ATPases have 2 components, F(1) - the catalytic core - and F(0) - the membrane proton channel. F(1) has five subunits: alpha(3), beta(3), gamma(1), delta(1), epsilon(1). F(0) has three main subunits: a(1), b(2) and c(10-14). The alpha and beta chains form an alternating ring which encloses part of the gamma chain. F(1) is attached to F(0) by a central stalk formed by the gamma and epsilon chains, while a peripheral stalk is formed by the delta and b chains.

It is found in the cell inner membrane. F(1)F(0) ATP synthase produces ATP from ADP in the presence of a proton or sodium gradient. F-type ATPases consist of two structural domains, F(1) containing the extramembraneous catalytic core and F(0) containing the membrane proton channel, linked together by a central stalk and a peripheral stalk. During catalysis, ATP synthesis in the catalytic domain of F(1) is coupled via a rotary mechanism of the central stalk subunits to proton translocation. Its function is as follows. This protein is part of the stalk that links CF(0) to CF(1). It either transmits conformational changes from CF(0) to CF(1) or is implicated in proton conduction. The chain is ATP synthase subunit delta from Marinomonas sp. (strain MWYL1).